A 411-amino-acid polypeptide reads, in one-letter code: Cladofulvin cluster transcriptional coactivator claA (411 aa).

Polar residues predominate over residues 1–27; that stretch reads MSDSLAGNGMRQNLNRSSTSSNHTGHA. Positions 1–32 are disordered; the sequence is MSDSLAGNGMRQNLNRSSTSSNHTGHAQNGRA. Positions 47–117 constitute an HTH iclR-type domain; the sequence is LACQVQSLAC…DPGHIAHTAL (71 aa). The segment at residues 77–96 is a DNA-binding region (H-T-H motif); it reads LHDVAELANVPASQLSRVVR.

The protein localises to the nucleus. In terms of biological role, transcriptional coactivator; part of the gene cluster that mediates the biosynthesis of cladofulvin, a conidial pigment not required for virulence but that plays a role in fitness and resistance to environmental stresses including UV light and low-temperature stress. With claE, coregulates the production of cladofulvin. In Passalora fulva (Tomato leaf mold), this protein is Cladofulvin cluster transcriptional coactivator claA.